The chain runs to 112 residues: MGVTKELKSPGNGVDFPKKGDFVTIHYTGRLTDGSKFDSSVDRNEPFQTQIGTGRVIKGWDEGVPQMSLGEKAVLTITPDYGYGARGFPPVIPGNSTLIFEVELLGINNKRA.

Residues 20-108 (GDFVTIHYTG…IFEVELLGIN (89 aa)) form the PPIase FKBP-type domain.

This sequence belongs to the FKBP-type PPIase family. FKBP1 subfamily.

It localises to the cytoplasm. It carries out the reaction [protein]-peptidylproline (omega=180) = [protein]-peptidylproline (omega=0). Inhibited by both FK506 and rapamycin. Its function is as follows. PPIases accelerate the folding of proteins. It catalyzes the cis-trans isomerization of proline imidic peptide bonds in oligopeptides. The chain is FK506-binding protein 1A (fpr1A) from Aspergillus fumigatus (strain ATCC MYA-4609 / CBS 101355 / FGSC A1100 / Af293) (Neosartorya fumigata).